Reading from the N-terminus, the 119-residue chain is Small ribosomal subunit protein uS13 (119 aa).

The tract at residues 93–119 (RRGLPLRGQRTRSNARTRKGKRKPIRS) is disordered.

Belongs to the universal ribosomal protein uS13 family. As to quaternary structure, part of the 30S ribosomal subunit. Forms a loose heterodimer with protein S19. Forms two bridges to the 50S subunit in the 70S ribosome.

In terms of biological role, located at the top of the head of the 30S subunit, it contacts several helices of the 16S rRNA. In the 70S ribosome it contacts the 23S rRNA (bridge B1a) and protein L5 of the 50S subunit (bridge B1b), connecting the 2 subunits; these bridges are implicated in subunit movement. Contacts the tRNAs in the A and P-sites. The sequence is that of Small ribosomal subunit protein uS13 from Coxiella burnetii (strain RSA 493 / Nine Mile phase I).